We begin with the raw amino-acid sequence, 185 residues long: Adenine phosphoribosyltransferase (185 aa).

The protein belongs to the purine/pyrimidine phosphoribosyltransferase family.

It localises to the cytoplasm. The enzyme catalyses AMP + diphosphate = 5-phospho-alpha-D-ribose 1-diphosphate + adenine. It participates in purine metabolism; AMP biosynthesis via salvage pathway; AMP from adenine: step 1/1. In terms of biological role, catalyzes a salvage reaction resulting in the formation of AMP, that is energically less costly than de novo synthesis. The chain is Adenine phosphoribosyltransferase (aprt-1) from Caenorhabditis elegans.